The primary structure comprises 227 residues: Venom allergen 5.01 (227 aa).

A signal peptide spans 1–23 (MEIGGLVYLILIITIINLSFGET). Disulfide bonds link Cys27/Cys39, Cys31/Cys124, Cys49/Cys117, and Cys193/Cys210. The SCP domain maps to 68–212 (LKRHNDFRQN…WYTHYLVCNY (145 aa)).

It belongs to the CRISP family. Venom allergen 5-like subfamily. Expressed by the venom gland.

The protein localises to the secreted. The sequence is that of Venom allergen 5.01 from Dolichovespula maculata (Bald-faced hornet).